The chain runs to 214 residues: Adenylate kinase (214 aa).

10 to 15 contributes to the ATP binding site; the sequence is GAGKGT. Residues 30–59 form an NMP region; it reads STGDMLRAAVKAGTPLGLEAKKVMDAGQLV. AMP is bound by residues T31, R36, 57 to 59, 85 to 88, and Q92; these read QLV and GFPR. Residues 122–159 form an LID region; that stretch reads GRRVHPGSGRVYHIVYNPPKVEGKDDVTGEDLAIRPDD. Residues R123 and 132-133 each bind ATP; that span reads VY. AMP-binding residues include R156 and R167. Q200 provides a ligand contact to ATP.

Belongs to the adenylate kinase family. In terms of assembly, monomer.

The protein resides in the cytoplasm. It catalyses the reaction AMP + ATP = 2 ADP. The protein operates within purine metabolism; AMP biosynthesis via salvage pathway; AMP from ADP: step 1/1. In terms of biological role, catalyzes the reversible transfer of the terminal phosphate group between ATP and AMP. Plays an important role in cellular energy homeostasis and in adenine nucleotide metabolism. This is Adenylate kinase from Shewanella loihica (strain ATCC BAA-1088 / PV-4).